The primary structure comprises 285 residues: Ret finger protein-like 4A (285 aa).

The RING-type; degenerate zinc finger occupies 11–53 (CYFCFRYLENPVYLNCGYICCFQCLDSLEKSPEGDGVLCPNCS). Residues 78 to 276 (EPQLNFILTM…ISICPVMNPS (199 aa)) enclose the B30.2/SPRY domain.

In terms of assembly, interacts with PSMB1, UBE2A and CCNB1.

It localises to the cytoplasm. It is found in the nucleus. In Rattus norvegicus (Rat), this protein is Ret finger protein-like 4A (Rfpl4a).